Consider the following 508-residue polypeptide: Light-independent protochlorophyllide reductase subunit B (508 aa).

Aspartate 36 provides a ligand contact to [4Fe-4S] cluster. Aspartate 294 functions as the Proton donor in the catalytic mechanism. 429–430 is a substrate binding site; that stretch reads GM.

The protein belongs to the ChlB/BchB/BchZ family. In terms of assembly, protochlorophyllide reductase is composed of three subunits; ChlL, ChlN and ChlB. Forms a heterotetramer of two ChlB and two ChlN subunits. Requires [4Fe-4S] cluster as cofactor.

The catalysed reaction is chlorophyllide a + oxidized 2[4Fe-4S]-[ferredoxin] + 2 ADP + 2 phosphate = protochlorophyllide a + reduced 2[4Fe-4S]-[ferredoxin] + 2 ATP + 2 H2O. The protein operates within porphyrin-containing compound metabolism; chlorophyll biosynthesis (light-independent). Functionally, component of the dark-operative protochlorophyllide reductase (DPOR) that uses Mg-ATP and reduced ferredoxin to reduce ring D of protochlorophyllide (Pchlide) to form chlorophyllide a (Chlide). This reaction is light-independent. The NB-protein (ChlN-ChlB) is the catalytic component of the complex. The sequence is that of Light-independent protochlorophyllide reductase subunit B from Thermosynechococcus vestitus (strain NIES-2133 / IAM M-273 / BP-1).